Here is a 154-residue protein sequence, read N- to C-terminus: Large ribosomal subunit protein uL24 (154 aa).

Residues 97-154 form a disordered region; that stretch reads EIAARKNLPPPEVPEETSNDTKESDENVTGADKEETNEIKEEDLNDNEDKNNDGSQEA. Residues 115–135 show a composition bias toward basic and acidic residues; the sequence is NDTKESDENVTGADKEETNEI.

This sequence belongs to the universal ribosomal protein uL24 family. As to quaternary structure, part of the 50S ribosomal subunit.

In terms of biological role, one of two assembly initiator proteins, it binds directly to the 5'-end of the 23S rRNA, where it nucleates assembly of the 50S subunit. Functionally, located at the polypeptide exit tunnel on the outside of the subunit. In Picrophilus torridus (strain ATCC 700027 / DSM 9790 / JCM 10055 / NBRC 100828 / KAW 2/3), this protein is Large ribosomal subunit protein uL24.